Here is a 119-residue protein sequence, read N- to C-terminus: Fluoride-specific ion channel FluC 1 (119 aa).

A run of 4 helical transmembrane segments spans residues 6-26, 31-51, 66-86, and 91-111; these read VALV…IAVV, FPWG…AIVY, VVAT…GETI, and RLAA…VLVA.

It belongs to the fluoride channel Fluc/FEX (TC 1.A.43) family.

Its subcellular location is the cell membrane. The catalysed reaction is fluoride(in) = fluoride(out). In terms of biological role, fluoride-specific ion channel. Important for reducing fluoride concentration in the cell, thus reducing its toxicity. The sequence is that of Fluoride-specific ion channel FluC 1 from Natronomonas pharaonis (strain ATCC 35678 / DSM 2160 / CIP 103997 / JCM 8858 / NBRC 14720 / NCIMB 2260 / Gabara) (Halobacterium pharaonis).